The sequence spans 253 residues: Ubiquinone/menaquinone biosynthesis C-methyltransferase UbiE (253 aa).

Residues Thr-76, Asp-97, and 125–126 each bind S-adenosyl-L-methionine; that span reads NA.

This sequence belongs to the class I-like SAM-binding methyltransferase superfamily. MenG/UbiE family.

The catalysed reaction is a 2-demethylmenaquinol + S-adenosyl-L-methionine = a menaquinol + S-adenosyl-L-homocysteine + H(+). The enzyme catalyses a 2-methoxy-6-(all-trans-polyprenyl)benzene-1,4-diol + S-adenosyl-L-methionine = a 5-methoxy-2-methyl-3-(all-trans-polyprenyl)benzene-1,4-diol + S-adenosyl-L-homocysteine + H(+). Its pathway is quinol/quinone metabolism; menaquinone biosynthesis; menaquinol from 1,4-dihydroxy-2-naphthoate: step 2/2. It functions in the pathway cofactor biosynthesis; ubiquinone biosynthesis. In terms of biological role, methyltransferase required for the conversion of demethylmenaquinol (DMKH2) to menaquinol (MKH2) and the conversion of 2-polyprenyl-6-methoxy-1,4-benzoquinol (DDMQH2) to 2-polyprenyl-3-methyl-6-methoxy-1,4-benzoquinol (DMQH2). The polypeptide is Ubiquinone/menaquinone biosynthesis C-methyltransferase UbiE (Rhodopseudomonas palustris (strain BisB5)).